Reading from the N-terminus, the 695-residue chain is Elongation factor G (695 aa).

One can recognise a tr-type G domain in the interval 12-286 (DKLRNIGIMA…AVIDYLPSPL (275 aa)). GTP is bound by residues 21–28 (AHIDAGKT), 85–89 (DTPGH), and 139–142 (NKMD).

The protein belongs to the TRAFAC class translation factor GTPase superfamily. Classic translation factor GTPase family. EF-G/EF-2 subfamily.

The protein resides in the cytoplasm. Catalyzes the GTP-dependent ribosomal translocation step during translation elongation. During this step, the ribosome changes from the pre-translocational (PRE) to the post-translocational (POST) state as the newly formed A-site-bound peptidyl-tRNA and P-site-bound deacylated tRNA move to the P and E sites, respectively. Catalyzes the coordinated movement of the two tRNA molecules, the mRNA and conformational changes in the ribosome. In Thermotoga petrophila (strain ATCC BAA-488 / DSM 13995 / JCM 10881 / RKU-1), this protein is Elongation factor G.